The sequence spans 1069 residues: Carbamoyl phosphate synthase large chain (1069 aa).

The interval 1-401 is carboxyphosphate synthetic domain; the sequence is MPLNKDIKKV…AFLKGIRSLE (401 aa). Residues Arg-129, Arg-169, Gly-175, Gly-176, Lys-208, Val-210, Glu-215, Gly-241, Ile-242, His-243, Gln-284, and Glu-298 each coordinate ATP. One can recognise an ATP-grasp 1 domain in the interval 133–327; it reads RDMMNRIGEP…IAKLAAKIAL (195 aa). Mg(2+) contacts are provided by Gln-284, Glu-298, and Asn-300. Mn(2+) is bound by residues Gln-284, Glu-298, and Asn-300. Residues 402-549 are oligomerization domain; that stretch reads IGKYSLDHNK…YSTYEQYDEV (148 aa). The interval 550–932 is carbamoyl phosphate synthetic domain; that stretch reads EVSNNKKVIV…ALYKGFVGAY (383 aa). In terms of domain architecture, ATP-grasp 2 spans 674–864; it reads DELLERLGIS…IVDLATQVML (191 aa). ATP is bound by residues Arg-710, Lys-749, Leu-751, Glu-755, Gly-780, Val-781, His-782, Ser-783, Gln-823, and Glu-835. Gln-823, Glu-835, and Asn-837 together coordinate Mg(2+). The Mn(2+) site is built by Gln-823, Glu-835, and Asn-837. The MGS-like domain occupies 932–1069; it reads YMYPSKEKGK…KDLEVFNIAK (138 aa). The segment at 933 to 1069 is allosteric domain; that stretch reads MYPSKEKGKI…KDLEVFNIAK (137 aa).

Belongs to the CarB family. Composed of two chains; the small (or glutamine) chain promotes the hydrolysis of glutamine to ammonia, which is used by the large (or ammonia) chain to synthesize carbamoyl phosphate. Tetramer of heterodimers (alpha,beta)4. The cofactor is Mg(2+). Mn(2+) serves as cofactor.

The catalysed reaction is hydrogencarbonate + L-glutamine + 2 ATP + H2O = carbamoyl phosphate + L-glutamate + 2 ADP + phosphate + 2 H(+). It catalyses the reaction hydrogencarbonate + NH4(+) + 2 ATP = carbamoyl phosphate + 2 ADP + phosphate + 2 H(+). It participates in amino-acid biosynthesis; L-arginine biosynthesis; carbamoyl phosphate from bicarbonate: step 1/1. It functions in the pathway pyrimidine metabolism; UMP biosynthesis via de novo pathway; (S)-dihydroorotate from bicarbonate: step 1/3. In terms of biological role, large subunit of the glutamine-dependent carbamoyl phosphate synthetase (CPSase). CPSase catalyzes the formation of carbamoyl phosphate from the ammonia moiety of glutamine, carbonate, and phosphate donated by ATP, constituting the first step of 2 biosynthetic pathways, one leading to arginine and/or urea and the other to pyrimidine nucleotides. The large subunit (synthetase) binds the substrates ammonia (free or transferred from glutamine from the small subunit), hydrogencarbonate and ATP and carries out an ATP-coupled ligase reaction, activating hydrogencarbonate by forming carboxy phosphate which reacts with ammonia to form carbamoyl phosphate. The polypeptide is Carbamoyl phosphate synthase large chain (Clostridium beijerinckii (strain ATCC 51743 / NCIMB 8052) (Clostridium acetobutylicum)).